The following is an 85-amino-acid chain: UPF0410 protein YdaS (85 aa).

3 consecutive transmembrane segments (helical) span residues 2–22, 28–48, and 58–78; these read LSFLVSLVVAIVIGLIGSAIV, GGIFGSMIAGLIGAWIGHGLL, and FAIFPAIIGAAIFVFLLGLIF.

Belongs to the UPF0410 family.

Its subcellular location is the cell membrane. The protein is UPF0410 protein YdaS (ydaS) of Bacillus subtilis (strain 168).